The sequence spans 132 residues: Small ribosomal subunit protein uS8 (132 aa).

The protein belongs to the universal ribosomal protein uS8 family. Part of the 30S ribosomal subunit. Contacts proteins S5 and S12.

Its function is as follows. One of the primary rRNA binding proteins, it binds directly to 16S rRNA central domain where it helps coordinate assembly of the platform of the 30S subunit. In Baumannia cicadellinicola subsp. Homalodisca coagulata, this protein is Small ribosomal subunit protein uS8.